We begin with the raw amino-acid sequence, 98 residues long: Large ribosomal subunit protein bL28 (98 aa).

The protein belongs to the bacterial ribosomal protein bL28 family.

This Thermus thermophilus (strain ATCC BAA-163 / DSM 7039 / HB27) protein is Large ribosomal subunit protein bL28.